We begin with the raw amino-acid sequence, 232 residues long: MKIAIIQFGGTNCDMDVLHVLKDVVGVDAETVWYKEENLTGFDGVVVPGGFSYGDYLRAGAIAARTPIMDSVKKIAAEGKPVLGICNGFQVLTEARLLAGALTTNEYPKFRCHWTNLRVETADTPFTSKFRKGEVIRMPIAHMEGKFYAEESTLAELDENEQVVFRYVDEKGRVTDEANPNGSLENIAGILNASRNILGLMPHPERASESILGSDDGRKVFESMADYITENF.

The Glutamine amidotransferase type-1 domain maps to 2 to 232 (KIAIIQFGGT…SMADYITENF (231 aa)). Catalysis depends on cysteine 86, which acts as the Nucleophile. Catalysis depends on residues histidine 203 and glutamate 205.

Part of the FGAM synthase complex composed of 1 PurL, 1 PurQ and 2 PurS subunits.

It localises to the cytoplasm. It catalyses the reaction N(2)-formyl-N(1)-(5-phospho-beta-D-ribosyl)glycinamide + L-glutamine + ATP + H2O = 2-formamido-N(1)-(5-O-phospho-beta-D-ribosyl)acetamidine + L-glutamate + ADP + phosphate + H(+). The catalysed reaction is L-glutamine + H2O = L-glutamate + NH4(+). Its pathway is purine metabolism; IMP biosynthesis via de novo pathway; 5-amino-1-(5-phospho-D-ribosyl)imidazole from N(2)-formyl-N(1)-(5-phospho-D-ribosyl)glycinamide: step 1/2. Functionally, part of the phosphoribosylformylglycinamidine synthase complex involved in the purines biosynthetic pathway. Catalyzes the ATP-dependent conversion of formylglycinamide ribonucleotide (FGAR) and glutamine to yield formylglycinamidine ribonucleotide (FGAM) and glutamate. The FGAM synthase complex is composed of three subunits. PurQ produces an ammonia molecule by converting glutamine to glutamate. PurL transfers the ammonia molecule to FGAR to form FGAM in an ATP-dependent manner. PurS interacts with PurQ and PurL and is thought to assist in the transfer of the ammonia molecule from PurQ to PurL. The protein is Phosphoribosylformylglycinamidine synthase subunit PurQ of Methanosarcina acetivorans (strain ATCC 35395 / DSM 2834 / JCM 12185 / C2A).